Here is a 778-residue protein sequence, read N- to C-terminus: GRIP and coiled-coil domain-containing protein 1 (778 aa).

Positions 13–61 (SKKDLLETIETQKKQLLQYQARLKDVVRAYKSLLKEKEALEASIKVLSV) form a coiled coil. Disordered regions lie at residues 70-157 (SGVQ…MDKR), 186-208 (YLAD…EEER), and 617-638 (GRRS…DTAS). Residues 83 to 93 (VDDRCSTHSED) are compositionally biased toward basic and acidic residues. 2 stretches are compositionally biased toward low complexity: residues 94–109 (STGT…SLTS) and 133–152 (ASGS…SAGS). Positions 152–702 (SEMDKRVHQL…EEGERHREEV (551 aa)) form a coiled coil. Residues 716–766 (QSREGANLEYLKNIIYRFLTLPDSLGRQQTLTAILTILHFSPEEKQVLMRL) enclose the GRIP domain.

The protein localises to the cytoplasm. It localises to the golgi apparatus membrane. Its function is as follows. Probably involved in maintaining Golgi structure. The chain is GRIP and coiled-coil domain-containing protein 1 (Gcc1) from Mus musculus (Mouse).